The sequence spans 243 residues: Adapter protein MecA (243 aa).

A disordered region spans residues 119-140 (NQVEDGQGIAHNPTKDTNDLDP).

This sequence belongs to the MecA family. As to quaternary structure, homodimer.

In terms of biological role, enables the recognition and targeting of unfolded and aggregated proteins to the ClpC protease or to other proteins involved in proteolysis. This Lactiplantibacillus plantarum (strain ATCC BAA-793 / NCIMB 8826 / WCFS1) (Lactobacillus plantarum) protein is Adapter protein MecA.